The sequence spans 258 residues: SufE-like protein 2, chloroplastic (258 aa).

Positions 1–32 are disordered; sequence MNTSSSFKALASPPLISTSRPTTKSFPNPRFT. The segment covering 15-32 has biased composition (polar residues); it reads LISTSRPTTKSFPNPRFT. Cys122 (cysteine persulfide intermediate) is an active-site residue.

Belongs to the SufE family. As to expression, highly expressed in flowers and pollen, and at low levels in roots, leaves and stems.

Its subcellular location is the plastid. It is found in the chloroplast. It participates in cofactor biosynthesis; iron-sulfur cluster biosynthesis. Its function is as follows. Participates in cysteine desulfurization mediated by NFS2. Can activate the cysteine desulfurase activity of NFS2 in vitro. Cysteine desulfurization mobilizes sulfur from L-cysteine to yield L-alanine and supplies the inorganic sulfur for iron-sulfur (Fe-S) cluster formation. In Arabidopsis thaliana (Mouse-ear cress), this protein is SufE-like protein 2, chloroplastic (SUFE2).